The following is a 68-amino-acid chain: U-poneritoxin(01)-Om4b (68 aa).

The first 25 residues, 1–25 (MKPSGLTLAFLVVFMMAIMYNSVQA), serve as a signal peptide directing secretion. Positions 26–39 (EALADADAEAFAEA) are excised as a propeptide.

The protein belongs to the formicidae venom precursor-01 superfamily. In terms of assembly, homo- or heterodimer with PLP4 (AC A0A348G5W0); disulfide-linked. Post-translationally, truncated sequences of this peptide have also been found in the venom. It is possible they have been cleaved in the venom. In terms of tissue distribution, expressed by the venom gland.

The protein localises to the secreted. Its function is as follows. This homodimer composed of two cationic amphipathic alpha-helical peptides has antimicrobial activities against E.coli, S.aureus (MIC=3.1 uM), and S.cerevisiae (MIC=3.1 uM). It also shows histamine-releasing activity (66.4% at 10 uM) and a weak hemolytic activity (10.5% at 50 uM). The polypeptide is U-poneritoxin(01)-Om4b (Odontomachus monticola (Trap-jaw ant)).